Consider the following 125-residue polypeptide: uncharacterized protein (125 aa).

Belongs to the anhydro-N-acetylmuramic acid kinase family.

This is an uncharacterized protein from Yersinia enterocolitica.